We begin with the raw amino-acid sequence, 323 residues long: Acetyl-coenzyme A carboxylase carboxyl transferase subunit alpha (323 aa).

Residues 40-293 (LSEKSLQLTK…RKALSDSLKT (254 aa)) form the CoA carboxyltransferase C-terminal domain.

The protein belongs to the AccA family. In terms of assembly, acetyl-CoA carboxylase is a heterohexamer composed of biotin carboxyl carrier protein (AccB), biotin carboxylase (AccC) and two subunits each of ACCase subunit alpha (AccA) and ACCase subunit beta (AccD).

The protein localises to the cytoplasm. The enzyme catalyses N(6)-carboxybiotinyl-L-lysyl-[protein] + acetyl-CoA = N(6)-biotinyl-L-lysyl-[protein] + malonyl-CoA. It participates in lipid metabolism; malonyl-CoA biosynthesis; malonyl-CoA from acetyl-CoA: step 1/1. Its function is as follows. Component of the acetyl coenzyme A carboxylase (ACC) complex. First, biotin carboxylase catalyzes the carboxylation of biotin on its carrier protein (BCCP) and then the CO(2) group is transferred by the carboxyltransferase to acetyl-CoA to form malonyl-CoA. The sequence is that of Acetyl-coenzyme A carboxylase carboxyl transferase subunit alpha from Polynucleobacter asymbioticus (strain DSM 18221 / CIP 109841 / QLW-P1DMWA-1) (Polynucleobacter necessarius subsp. asymbioticus).